The chain runs to 96 residues: (4S)-4-hydroxy-5-phosphonooxypentane-2,3-dione isomerase (96 aa).

Residues 2 to 91 (HVTLVEINVH…MTGPRTKKVF (90 aa)) form the ABM domain.

Belongs to the LsrG family. Homodimer.

The protein resides in the cytoplasm. It carries out the reaction (2S)-2-hydroxy-3,4-dioxopentyl phosphate = 3-hydroxy-2,4-dioxopentyl phosphate. In terms of biological role, involved in the degradation of phospho-AI-2, thereby terminating induction of the lsr operon and closing the AI-2 signaling cycle. Catalyzes the conversion of (4S)-4-hydroxy-5-phosphonooxypentane-2,3-dione (P-DPD) to 3-hydroxy-5-phosphonooxypentane-2,4-dione (P-HPD). The sequence is that of (4S)-4-hydroxy-5-phosphonooxypentane-2,3-dione isomerase from Salmonella typhimurium (strain LT2 / SGSC1412 / ATCC 700720).